The following is a 679-amino-acid chain: DNA ligase (679 aa).

NAD(+) is bound by residues 36 to 40 (DAQYD), 85 to 86 (SL), and glutamate 116. Catalysis depends on lysine 118, which acts as the N6-AMP-lysine intermediate. The NAD(+) site is built by arginine 139, glutamate 174, lysine 300, and lysine 324. 4 residues coordinate Zn(2+): cysteine 418, cysteine 421, cysteine 436, and cysteine 441. One can recognise a BRCT domain in the interval 600–679 (EGGGPLNGKV…NEFRELTGRK (80 aa)).

The protein belongs to the NAD-dependent DNA ligase family. LigA subfamily. Mg(2+) serves as cofactor. Requires Mn(2+) as cofactor.

It carries out the reaction NAD(+) + (deoxyribonucleotide)n-3'-hydroxyl + 5'-phospho-(deoxyribonucleotide)m = (deoxyribonucleotide)n+m + AMP + beta-nicotinamide D-nucleotide.. In terms of biological role, DNA ligase that catalyzes the formation of phosphodiester linkages between 5'-phosphoryl and 3'-hydroxyl groups in double-stranded DNA using NAD as a coenzyme and as the energy source for the reaction. It is essential for DNA replication and repair of damaged DNA. The polypeptide is DNA ligase (Pelotomaculum thermopropionicum (strain DSM 13744 / JCM 10971 / SI)).